The primary structure comprises 208 residues: Probable GTP-binding protein EngB (208 aa).

The region spanning 18 to 187 (KQFEICVIGR…FALMKKVVIE (170 aa)) is the EngB-type G domain. Residues 26–33 (GRSNVGKS), 52–56 (GRTQL), 69–72 (DLPG), 135–138 (NKVD), and 166–168 (VSA) each bind GTP. Mg(2+)-binding residues include S33 and T54.

It belongs to the TRAFAC class TrmE-Era-EngA-EngB-Septin-like GTPase superfamily. EngB GTPase family. It depends on Mg(2+) as a cofactor.

Necessary for normal cell division and for the maintenance of normal septation. This chain is Probable GTP-binding protein EngB, found in Ureaplasma urealyticum serovar 10 (strain ATCC 33699 / Western).